We begin with the raw amino-acid sequence, 181 residues long: ATP synthase subunit b (181 aa).

Residues 24–44 (LFPNLPNFIAHLLATIILVIV) traverse the membrane as a helical segment.

The protein belongs to the ATPase B chain family. In terms of assembly, F-type ATPases have 2 components, F(1) - the catalytic core - and F(0) - the membrane proton channel. F(1) has five subunits: alpha(3), beta(3), gamma(1), delta(1), epsilon(1). F(0) has three main subunits: a(1), b(2) and c(10-14). The alpha and beta chains form an alternating ring which encloses part of the gamma chain. F(1) is attached to F(0) by a central stalk formed by the gamma and epsilon chains, while a peripheral stalk is formed by the delta and b chains.

It is found in the cell membrane. Functionally, f(1)F(0) ATP synthase produces ATP from ADP in the presence of a proton or sodium gradient. F-type ATPases consist of two structural domains, F(1) containing the extramembraneous catalytic core and F(0) containing the membrane proton channel, linked together by a central stalk and a peripheral stalk. During catalysis, ATP synthesis in the catalytic domain of F(1) is coupled via a rotary mechanism of the central stalk subunits to proton translocation. In terms of biological role, component of the F(0) channel, it forms part of the peripheral stalk, linking F(1) to F(0). The polypeptide is ATP synthase subunit b (Mycoplasma mycoides subsp. mycoides SC (strain CCUG 32753 / NCTC 10114 / PG1)).